The following is a 300-amino-acid chain: Bifunctional protein FolD (300 aa).

NADP(+) contacts are provided by residues 168 to 170 (GRS), Ser193, and Ile234.

Belongs to the tetrahydrofolate dehydrogenase/cyclohydrolase family. As to quaternary structure, homodimer.

The enzyme catalyses (6R)-5,10-methylene-5,6,7,8-tetrahydrofolate + NADP(+) = (6R)-5,10-methenyltetrahydrofolate + NADPH. It carries out the reaction (6R)-5,10-methenyltetrahydrofolate + H2O = (6R)-10-formyltetrahydrofolate + H(+). Its pathway is one-carbon metabolism; tetrahydrofolate interconversion. Functionally, catalyzes the oxidation of 5,10-methylenetetrahydrofolate to 5,10-methenyltetrahydrofolate and then the hydrolysis of 5,10-methenyltetrahydrofolate to 10-formyltetrahydrofolate. The chain is Bifunctional protein FolD from Ehrlichia ruminantium (strain Gardel).